A 361-amino-acid chain; its full sequence is 5-formaminoimidazole-4-carboxamide-1-(beta)-D-ribofuranosyl 5'-monophosphate synthetase (361 aa).

Residues histidine 27 and serine 94 each contribute to the 5-amino-1-(5-phospho-beta-D-ribosyl)imidazole-4-carboxamide site. The 233-residue stretch at 116-348 (RRILRWESER…MGQRIAREIK (233 aa)) folds into the ATP-grasp domain. ATP-binding positions include 156–166 (KFPGARGGRGY), 199–202 (EEYV), and glutamate 230. Asparagine 258 lines the 5-amino-1-(5-phospho-beta-D-ribosyl)imidazole-4-carboxamide pocket. Mg(2+) is bound by residues glutamine 297 and glutamate 310.

The protein belongs to the phosphohexose mutase family. Homohexamer. Dimer of trimers. Mg(2+) serves as cofactor. Mn(2+) is required as a cofactor.

The catalysed reaction is 5-amino-1-(5-phospho-beta-D-ribosyl)imidazole-4-carboxamide + formate + ATP = 5-formamido-1-(5-phospho-D-ribosyl)imidazole-4-carboxamide + ADP + phosphate. It functions in the pathway purine metabolism; IMP biosynthesis via de novo pathway; 5-formamido-1-(5-phospho-D-ribosyl)imidazole-4-carboxamide from 5-amino-1-(5-phospho-D-ribosyl)imidazole-4-carboxamide (formate route): step 1/1. Inhibited by ADP. In terms of biological role, catalyzes the ATP- and formate-dependent formylation of 5-aminoimidazole-4-carboxamide-1-beta-d-ribofuranosyl 5'-monophosphate (AICAR) to 5-formaminoimidazole-4-carboxamide-1-beta-d-ribofuranosyl 5'-monophosphate (FAICAR) in the absence of folates. This Methanocaldococcus jannaschii (strain ATCC 43067 / DSM 2661 / JAL-1 / JCM 10045 / NBRC 100440) (Methanococcus jannaschii) protein is 5-formaminoimidazole-4-carboxamide-1-(beta)-D-ribofuranosyl 5'-monophosphate synthetase.